Reading from the N-terminus, the 714-residue chain is Protein BLISTER (714 aa).

Disordered stretches follow at residues 1–113 (MASA…VDFS), 219–261 (SSYL…KRSR), 288–325 (VTSSGSQLSGSDGFGPSYISGRRDSNGPSSLTSGASDY), and 519–576 (MVQK…SSNT). Positions 8–33 (RRQEDVEAGRRKLEQFRKRKAAEKAK) are enriched in basic and acidic residues. Polar residues-rich tracts occupy residues 36-50 (SQNTQPVDNSQQSVI) and 58-74 (SISNGPLKQSAESTSNE). Basic and acidic residues predominate over residues 92–102 (DGSKERSRQDD). 4 stretches are compositionally biased toward polar residues: residues 219–253 (SSYLFNSPDTSSRPSEPSDFSVNITSSSPLNSAKS), 288–297 (VTSSGSQLSG), 313–322 (NGPSSLTSGA), and 519–561 (MVQK…SSNQ). A coiled-coil region spans residues 356-525 (NDDFTALEQH…LQTMVQKASS (170 aa)). Over residues 562–576 (ETDSTTLLESDSSNT) the composition is skewed to low complexity.

Interacts with CLF. In terms of tissue distribution, expressed in root tips, emerging lateral roots, shoot apical meristem (SAM), vasculature of cotyledons, leaves, sepals and carpels.

It is found in the nucleus. Its subcellular location is the cytoplasm. Is required for normal leaf, flower and seed development and controls cotyledon and leaf patterning by inhibiting premature differentiation. Regulates the expression of a subset of PcG target genes. Is required for the repression of the floral specific genes PI, SEP2, and SEP3, but also for the activation of FLC. Involved in response to cold. Involved in the regulation of COR15A, COR15B, BAM3 and AMY3 transcripts, and ascorbate levels in response to prolonged chilling temperatures. This chain is Protein BLISTER, found in Arabidopsis thaliana (Mouse-ear cress).